The chain runs to 534 residues: Unguisins hydrolase ungD' (534 aa).

It belongs to the peptidase S12 family.

It functions in the pathway secondary metabolite biosynthesis. Hydrolase; part of the gene cluster that mediates the biosynthesis of the unguisins, gamma-aminobutyric acid (GABA)-containing fungal cyclic heptapeptides with the amino acid sequence cyclo-(D-Ala1-D-Val2-L-Leu3-beta-MePhe4-D-Ala5-D-Trp6-GABA7) for unguisin H and cyclo-(D-Ala1-D-Ala2-L-Leu3-beta-MePhe4-D-Ala5-D-Trp6-GABA7) for unguisin I. Within the pathway, the hydrolase ungD' catalyzes the hydrolysis between the D-tryptophan and GABA residues of unguisins H and I to produce the corresponding linear peptides. The alanine racemase ungC' catalyzes the interconversion of L-alanine and D-alanine, providing the D-alanine which is accepted by the first adenylation domain of the nonribosomal peptide synthetase (NRPS) ungA', whereas the methyltransferase ungE' provides the (2R,3R)-beta-methylphenylalanine residue incorporated by the module 4. UngA' is the main enzyme within the cluster which condenses the 7 residues using its respective 7 modules. The terminal condensation domain (Ct) is involved in cyclization with D-alanine and thereby releasing of unguisins H and I. The sequence is that of Unguisins hydrolase ungD' from Aspergillus campestris (strain IBT 28561).